The following is a 349-amino-acid chain: Putative F-box/LRR-repeat protein At3g16555 (349 aa).

One can recognise an F-box domain in the interval 1-48 (MVLLPWELEEDILSRLPPRSLVQFRSVCKRWNALFDVKSFNKDQFARA). Residues 267–290 (VVWISLLTLPPNNLPNLFIVCYGI) form an LRR repeat.

The chain is Putative F-box/LRR-repeat protein At3g16555 from Arabidopsis thaliana (Mouse-ear cress).